The primary structure comprises 409 residues: Phosphopentomutase (409 aa).

D10, D302, H307, D343, H344, and H355 together coordinate Mn(2+).

The protein belongs to the phosphopentomutase family. It depends on Mn(2+) as a cofactor.

It is found in the cytoplasm. The enzyme catalyses 2-deoxy-alpha-D-ribose 1-phosphate = 2-deoxy-D-ribose 5-phosphate. It carries out the reaction alpha-D-ribose 1-phosphate = D-ribose 5-phosphate. It participates in carbohydrate degradation; 2-deoxy-D-ribose 1-phosphate degradation; D-glyceraldehyde 3-phosphate and acetaldehyde from 2-deoxy-alpha-D-ribose 1-phosphate: step 1/2. Its function is as follows. Isomerase that catalyzes the conversion of deoxy-ribose 1-phosphate (dRib-1-P) and ribose 1-phosphate (Rib-1-P) to deoxy-ribose 5-phosphate (dRib-5-P) and ribose 5-phosphate (Rib-5-P), respectively. This Chelativorans sp. (strain BNC1) protein is Phosphopentomutase.